The sequence spans 68 residues: Small ribosomal subunit protein bS21 (68 aa).

Residues 35-68 form a disordered region; it reads HYEKPSEKRARERAAAVRRARKMERKRMERDGIK. A compositionally biased stretch (basic and acidic residues) spans 37–49; that stretch reads EKPSEKRARERAA. Residues 50–59 show a composition bias toward basic residues; it reads AVRRARKMER.

It belongs to the bacterial ribosomal protein bS21 family.

The chain is Small ribosomal subunit protein bS21 from Sphingopyxis alaskensis (strain DSM 13593 / LMG 18877 / RB2256) (Sphingomonas alaskensis).